The chain runs to 352 residues: Aliphatic aldoxime dehydratase (352 aa).

An aliphatic aldoxime is bound at residue S219. H299 is a binding site for heme b. Position 320 (H320) interacts with an aliphatic aldoxime. Residue H320 is part of the active site.

It belongs to the heme-containing dehydratase family. Homodimer. It depends on heme b as a cofactor. Requires Ca(2+) as cofactor.

It carries out the reaction an aliphatic aldoxime = a nitrile + H2O. Its activity is regulated as follows. Active when the heme iron is in the ferrous state. Is very sensitive to AgNO(3), is also inhibited by hydroxylamine and phenylhydrazine, and hardly inhibited by thiol reagents. Not sensitive to chelating agents and serine-modifying reagents. Catalyzes the dehydration of aldoximes to their corresponding nitrile. Aliphatic aldoximes are more effective substrates than aromatic aldoximes. Shows high activity with butyraldoxime and acetaldoxime, but only weak activity with the aromatic aldoxime pyridine-2-aldoxime. Cannot use benzaldoxime, isonitrosoacetophenone and pyridine-4-aldoxime. Is involved in the metabolism of aldoxime in vivo. The sequence is that of Aliphatic aldoxime dehydratase from Pseudomonas chlororaphis (Pseudomonas aureofaciens).